Consider the following 308-residue polypeptide: Pantoate--beta-alanine ligase (308 aa).

Position 2 (Ala2) is a propeptide, removed; partial.

It belongs to the pantothenate synthetase family. As to quaternary structure, homodimer. As to expression, expressed at low levels in leaf and root.

Its subcellular location is the cytoplasm. It catalyses the reaction (R)-pantoate + beta-alanine + ATP = (R)-pantothenate + AMP + diphosphate + H(+). It functions in the pathway cofactor biosynthesis; (R)-pantothenate biosynthesis; (R)-pantothenate from (R)-pantoate and beta-alanine: step 1/1. The protein is Pantoate--beta-alanine ligase (PANC) of Lotus japonicus (Lotus corniculatus var. japonicus).